The primary structure comprises 474 residues: MKEYQTITEISGPLVYAEVDEAIGYDEIVEIETAQGETLRGQVLESSEGVVAIQVFEGTSGIDQNASVRFLGETMKMPVTEDLLGRVLDGSGRPIDDGPEIVPEERQDIVGAAINPYSREYPEEFIETGVSAIDGMNTLVRGQKLPIFSSSGQPHSQLAMQIARQASVPEEEEGGDDEEGSEFAVIFGAMGITAEEANEFMQDFERTGALERSVVFMNLADDPAVERTVTPRMVLTTAEYLAFEKDYHVLVILTDMTNYCEALREIGAAREEVPGRRGYPGYMYTDLAQLYERAGRIQGRDGSVTQIPILTMPGDDDTHPIPDLTGYITEGQIYVDPDLNSQGLQPPINVLPSLSRLMDDGIGEGLTREDHADVKDQMFAAYAEGEDLRDLVNIVGREALSELDNKYLDFADDFESEFVDQGFDQNRSIEETLEIGWDLLSMLPKDALNRIDEEFIEKYYREDDSDRQVVEAAD.

The protein belongs to the ATPase alpha/beta chains family. In terms of assembly, has multiple subunits with at least A(3), B(3), C, D, E, F, H, I and proteolipid K(x).

Its subcellular location is the cell membrane. Functionally, component of the A-type ATP synthase that produces ATP from ADP in the presence of a proton gradient across the membrane. The B chain is a regulatory subunit. The sequence is that of A-type ATP synthase subunit B from Halorubrum lacusprofundi (strain ATCC 49239 / DSM 5036 / JCM 8891 / ACAM 34).